The chain runs to 151 residues: UPF0756 membrane protein Moth_0120 (151 aa).

Transmembrane regions (helical) follow at residues 6–26 (VILI…IAAA), 52–72 (AGLI…RVAP), 75–95 (MLQS…IIAT), and 111–131 (MMIG…GIPV).

Belongs to the UPF0756 family.

The protein resides in the cell membrane. This is UPF0756 membrane protein Moth_0120 from Moorella thermoacetica (strain ATCC 39073 / JCM 9320).